The sequence spans 250 residues: Oil body-associated protein 2B (250 aa).

The interval 1–29 (MSSSDQNPAATPASSGPAEPSPPGRPTAV) is disordered. Residues 8 to 18 (PAATPASSGPA) show a composition bias toward low complexity.

It belongs to the OBAP family.

The sequence is that of Oil body-associated protein 2B from Zea mays (Maize).